Reading from the N-terminus, the 170-residue chain is Small ribosomal subunit protein mS25 (170 aa).

It belongs to the mitochondrion-specific ribosomal protein mS25 family. In terms of assembly, component of the mitochondrial ribosome small subunit (28S) which comprises a 12S rRNA and about 30 distinct proteins.

It localises to the mitochondrion. This chain is Small ribosomal subunit protein mS25 (mrps-25), found in Caenorhabditis elegans.